We begin with the raw amino-acid sequence, 132 residues long: Small ribosomal subunit protein uS8 (132 aa).

The protein belongs to the universal ribosomal protein uS8 family. As to quaternary structure, part of the 30S ribosomal subunit. Contacts proteins S5 and S12.

One of the primary rRNA binding proteins, it binds directly to 16S rRNA central domain where it helps coordinate assembly of the platform of the 30S subunit. This is Small ribosomal subunit protein uS8 from Mycolicibacterium smegmatis (strain ATCC 700084 / mc(2)155) (Mycobacterium smegmatis).